We begin with the raw amino-acid sequence, 270 residues long: uncharacterized protein (270 aa).

This is an uncharacterized protein from Bacillus anthracis.